Here is a 295-residue protein sequence, read N- to C-terminus: Ubiquinol-cytochrome c reductase complex assembly factor 1 (295 aa).

The protein belongs to the CBP3 family. As to quaternary structure, interacts with UQCC2. Interacts with UQCC3. Forms a complex, named COMB/coordinator of mitochondrial CYTB biogenesis, composed of UQCC1, UQCC2, UQCC4, UQCC5 and UQCC6; stabilizes nascent cytochrome b/MT-CYB and promotes its membrane insertion. Forms a complex, named COMA, composed of UQCC1, UQCC2 and UQCC4; activates MT-CYB translation. Forms a complex, named COMC, composed of UQCC1, UQCC2; UQCC3 and UQCC4; mediates MT-CYB hemylation and association with the first nuclear-encoded CIII subunit UQCRQ. In terms of tissue distribution, in the brain it is restricted to the olfactory bulb, the hippocampus, the piriform cortex and the Purkinje cells.

It localises to the mitochondrion inner membrane. The protein localises to the cytoplasmic vesicle. Its function is as follows. Required for the assembly of the ubiquinol-cytochrome c reductase complex (mitochondrial respiratory chain complex III or cytochrome b-c1 complex). Involved in cytochrome b translation and/or stability. The polypeptide is Ubiquinol-cytochrome c reductase complex assembly factor 1 (Uqcc1) (Mus musculus (Mouse)).